An 875-amino-acid chain; its full sequence is Cell surface glycoprotein (875 aa).

An N-terminal signal peptide occupies residues 1–23 (MTNTKQKINAVFLSALMVMSVFA). The span at 137–157 (EVQNGGSGDVTGSTLQTSSSG) shows a compositional bias: polar residues. Disordered stretches follow at residues 137–158 (EVQNGGSGDVTGSTLQTSSSGP) and 197–217 (LPTADRNNDNGASGSNGDFDV). Over residues 205–216 (DNGASGSNGDFD) the composition is skewed to low complexity. Asn-253 carries an N-linked (GlcNAc...) asparagine glycan. Residues 380-414 (YPASDSSNDGYASGGSHASSVTVRDTDGDGTDDSE) are disordered. The span at 383 to 402 (SDSSNDGYASGGSHASSVTV) shows a compositional bias: polar residues. N-linked (GlcNAc...) asparagine glycans are attached at residues Asn-455, Asn-563, Asn-715, and Asn-774. The tract at residues 794–852 (EAGSLEEEQPDTETPEPDTETPEPDTETPEPDTETPEPDTETPEPDTETEEATTEASGP) is disordered. Over residues 797–846 (SLEEEQPDTETPEPDTETPEPDTETPEPDTETPEPDTETPEPDTETEEAT) the composition is skewed to acidic residues. A helical membrane pass occupies residues 851-875 (GPGFTAAIALIALVAAALLAVRRDN). Residues 852–854 (PGF) carry the PGF sorting signal motif.

This sequence belongs to the halobacterial S-layer protein family. Post-translationally, asn-455 is glycosylated by a pentasaccharide comprising a hexose, 2 hexuronic acids, a methyl ester of a hexuronic acid and a final hexose. The complete pentasaccharide is first assembled on dolichol phosphate and then transferred the glycan to the target Asn. In terms of processing, cleaved by the archaeosortase ArtA at the C-terminus, with removal of a short hydrophobic segment. Lipidation.

It localises to the secreted. The protein resides in the cell wall. The protein localises to the S-layer. It is found in the cell membrane. Functionally, S-layer protein. The S-layer is a paracrystalline mono-layered assembly of proteins which coat the surface of the cell. The protein is Cell surface glycoprotein (csg1) of Haloarcula marismortui (strain ATCC 43049 / DSM 3752 / JCM 8966 / VKM B-1809) (Halobacterium marismortui).